We begin with the raw amino-acid sequence, 879 residues long: Protein translocase subunit SecA (879 aa).

ATP is bound by residues Q86, 104-108 (GEGKT), and D500. C863, C865, C874, and H875 together coordinate Zn(2+).

The protein belongs to the SecA family. In terms of assembly, monomer and homodimer. Part of the essential Sec protein translocation apparatus which comprises SecA, SecYEG and auxiliary proteins SecDF-YajC and YidC. Zn(2+) serves as cofactor.

It is found in the cell inner membrane. Its subcellular location is the cytoplasm. The catalysed reaction is ATP + H2O + cellular proteinSide 1 = ADP + phosphate + cellular proteinSide 2.. Functionally, part of the Sec protein translocase complex. Interacts with the SecYEG preprotein conducting channel. Has a central role in coupling the hydrolysis of ATP to the transfer of proteins into and across the cell membrane, serving both as a receptor for the preprotein-SecB complex and as an ATP-driven molecular motor driving the stepwise translocation of polypeptide chains across the membrane. In Orientia tsutsugamushi (strain Ikeda) (Rickettsia tsutsugamushi), this protein is Protein translocase subunit SecA.